Reading from the N-terminus, the 320-residue chain is Zinc finger protein 330 (320 aa).

A disordered region spans residues 1–23; it reads MPKKKTGARKKAENRREREKQLR. Residues 3–11 carry the Nuclear localization signal motif; sequence KKKTGARKK. Residues 10–22 are compositionally biased toward basic and acidic residues; it reads KKAENRREREKQL. 4 consecutive C4-type zinc fingers follow at residues 42–58, 67–104, 129–149, and 175–189; these read CDKC…CYFC, CAQC…CDFC, CVEC…CSFC, and CVSC…CLRC. Disordered regions lie at residues 206–250 and 264–303; these read EKGK…ASGY and GASY…TNLN. Basic and acidic residues predominate over residues 216 to 225; sequence CGHETQETKD. Residues 269–287 show a composition bias toward acidic residues; the sequence is DEEEDEYEAEDDEEEEDEG. S291 carries the post-translational modification Phosphoserine.

Belongs to the NOA36 family.

The protein resides in the nucleus. The protein localises to the nucleolus. Its subcellular location is the chromosome. It is found in the centromere. In Bos taurus (Bovine), this protein is Zinc finger protein 330 (ZNF330).